The chain runs to 322 residues: N-acetyl-gamma-glutamyl-phosphate reductase (322 aa).

C117 is a catalytic residue.

The protein belongs to the NAGSA dehydrogenase family. Type 2 subfamily.

The protein localises to the cytoplasm. The catalysed reaction is N-acetyl-L-glutamate 5-semialdehyde + phosphate + NADP(+) = N-acetyl-L-glutamyl 5-phosphate + NADPH + H(+). The protein operates within amino-acid biosynthesis; L-arginine biosynthesis; N(2)-acetyl-L-ornithine from L-glutamate: step 3/4. Functionally, catalyzes the NADPH-dependent reduction of N-acetyl-5-glutamyl phosphate to yield N-acetyl-L-glutamate 5-semialdehyde. The protein is N-acetyl-gamma-glutamyl-phosphate reductase of Trichormus variabilis (strain ATCC 29413 / PCC 7937) (Anabaena variabilis).